We begin with the raw amino-acid sequence, 399 residues long: Formate-dependent phosphoribosylglycinamide formyltransferase (399 aa).

Residues 21–22 (EL) and Glu-81 each bind N(1)-(5-phospho-beta-D-ribosyl)glycinamide. ATP is bound by residues Arg-114, Lys-156, 161 to 166 (SSGKGQ), 196 to 199 (EGFI), and Glu-204. One can recognise an ATP-grasp domain in the interval 119–314 (RLAAEELGLP…EFELHARAIL (196 aa)). The Mg(2+) site is built by Glu-273 and Glu-285. N(1)-(5-phospho-beta-D-ribosyl)glycinamide-binding positions include Asp-292, Lys-361, and 368 to 369 (RR). Residues 370 to 399 (MGVAVANGESTDQARERAKLAASKVRPTRT) are disordered.

It belongs to the PurK/PurT family. As to quaternary structure, homodimer.

The catalysed reaction is N(1)-(5-phospho-beta-D-ribosyl)glycinamide + formate + ATP = N(2)-formyl-N(1)-(5-phospho-beta-D-ribosyl)glycinamide + ADP + phosphate + H(+). The protein operates within purine metabolism; IMP biosynthesis via de novo pathway; N(2)-formyl-N(1)-(5-phospho-D-ribosyl)glycinamide from N(1)-(5-phospho-D-ribosyl)glycinamide (formate route): step 1/1. Functionally, involved in the de novo purine biosynthesis. Catalyzes the transfer of formate to 5-phospho-ribosyl-glycinamide (GAR), producing 5-phospho-ribosyl-N-formylglycinamide (FGAR). Formate is provided by PurU via hydrolysis of 10-formyl-tetrahydrofolate. This chain is Formate-dependent phosphoribosylglycinamide formyltransferase, found in Dechloromonas aromatica (strain RCB).